We begin with the raw amino-acid sequence, 324 residues long: Reaction center protein M chain (324 aa).

At 2–51 (ADYQTIYTQIQARGPHITVSGEWGDNDRVGKPFYSYWLGKIGDAQIGPIY) the chain is on the cytoplasmic side. Residues 52–76 (LGASGIAAFAFGSTAILIILFNMAA) traverse the membrane as a helical segment. Over 77–110 (EVHFDPLQFFRQFFWLGLYPPKAQYGMGIPPLHD) the chain is Periplasmic. A helical membrane pass occupies residues 111-137 (GGWWLMAGLFMTLSLGSWWIRVYSRAR). Residues 138–142 (ALGLG) are Cytoplasmic-facing. A helical transmembrane segment spans residues 143 to 166 (THIAWNFAAAIFFVLCIGCIHPTL). Over 167–197 (VGSWSEGVPFGIWPHIDWLTAFSIRYGNFYY) the chain is Periplasmic. Positions 181 and 201 each coordinate (7R,8Z)-bacteriochlorophyll b. The chain crosses the membrane as a helical span at residues 198–223 (CPWHGFSIGFAYGCGLLFAAHGATIL). Residues histidine 218 and glutamate 233 each contribute to the Fe cation site. At 224–259 (AVARFGGDREIEQITDRGTAVERAALFWRWTIGFNA) the chain is on the cytoplasmic side. Tryptophan 251 lines the a ubiquinone pocket. The helical transmembrane segment at 260–284 (TIESVHRWGWFFSLMVMVSASVGIL) threads the bilayer. Position 265 (histidine 265) interacts with Fe cation. The Periplasmic portion of the chain corresponds to 285–324 (LTGTFVDNWYLWCVKHGAAPDYPAYLPATPDPASLPGAPK).

Belongs to the reaction center PufL/M/PsbA/D family. In terms of assembly, reaction center is composed of four bacteriochlorophylls, two bacteriopheophytins, two ubiquinones, one iron, and three highly hydrophobic polypeptide chains (designated L, M, and H).

Its subcellular location is the cellular chromatophore membrane. Its function is as follows. The reaction center is a membrane-bound complex that mediates the initial photochemical event in the electron transfer process of photosynthesis. The protein is Reaction center protein M chain (pufM) of Blastochloris viridis (Rhodopseudomonas viridis).